A 55-amino-acid chain; its full sequence is uncharacterized protein (55 aa).

2 consecutive transmembrane segments (helical) span residues 2–19 (VIGL…SFIA) and 24–46 (LLSI…FRYF).

The protein resides in the cell membrane. This is an uncharacterized protein from Alkalihalophilus pseudofirmus (strain ATCC BAA-2126 / JCM 17055 / OF4) (Bacillus pseudofirmus).